A 95-amino-acid polypeptide reads, in one-letter code: Acylphosphatase (95 aa).

The 88-residue stretch at 7-94 (AALVRITGRV…EAPAGFRITR (88 aa)) folds into the Acylphosphatase-like domain. Active-site residues include R22 and N40. Over residues 76 to 88 (VASEEASSAEAPA) the composition is skewed to low complexity. Residues 76-95 (VASEEASSAEAPAGFRITRG) form a disordered region.

It belongs to the acylphosphatase family.

The catalysed reaction is an acyl phosphate + H2O = a carboxylate + phosphate + H(+). In Rhizobium meliloti (strain 1021) (Ensifer meliloti), this protein is Acylphosphatase (acyP).